The chain runs to 124 residues: Small ribosomal subunit protein uS12 (124 aa).

The interval 1–23 (MATINQLVRKPRRSKVTKSNSAA) is disordered. Aspartate 89 carries the post-translational modification 3-methylthioaspartic acid.

It belongs to the universal ribosomal protein uS12 family. As to quaternary structure, part of the 30S ribosomal subunit. Contacts proteins S8 and S17. May interact with IF1 in the 30S initiation complex.

Its function is as follows. With S4 and S5 plays an important role in translational accuracy. In terms of biological role, interacts with and stabilizes bases of the 16S rRNA that are involved in tRNA selection in the A site and with the mRNA backbone. Located at the interface of the 30S and 50S subunits, it traverses the body of the 30S subunit contacting proteins on the other side and probably holding the rRNA structure together. The combined cluster of proteins S8, S12 and S17 appears to hold together the shoulder and platform of the 30S subunit. The protein is Small ribosomal subunit protein uS12 of Pseudoalteromonas translucida (strain TAC 125).